The sequence spans 303 residues: Kanosamine kinase (303 aa).

The protein belongs to the ROK (NagC/XylR) family.

The catalysed reaction is kanosamine + ATP = D-kanosamine 6-phosphate + ADP + H(+). Its pathway is antibiotic biosynthesis; rifamycin B biosynthesis. Inhibited by Zn(2+), Cu(2+), and Fe(2+). Its function is as follows. Involved in the biosynthesis of 3-amino-5-hydroxybenzoate (AHBA), a compound that then serves as the starter unit for the assembly of a polyketide during the biosynthesis of rifamycin B and other ansamycin antibiotics. Catalyzes only the phosphorylation of kanosamine to yield kanosamine 6-phosphate. In Amycolatopsis mediterranei (strain S699) (Nocardia mediterranei), this protein is Kanosamine kinase (rifN).